Consider the following 1177-residue polypeptide: DNA-directed RNA polymerase subunit beta (1177 aa).

A compositionally biased stretch (acidic residues) spans 1147–1161 (DDTEIEMRDTEDDDD). Residues 1147–1177 (DDTEIEMRDTEDDDDHQSADKLNVEVETTKE) are disordered. The span at 1162–1177 (HQSADKLNVEVETTKE) shows a compositional bias: basic and acidic residues.

This sequence belongs to the RNA polymerase beta chain family. The RNAP catalytic core consists of 2 alpha, 1 beta, 1 beta' and 1 omega subunit. When a sigma factor is associated with the core the holoenzyme is formed, which can initiate transcription.

The enzyme catalyses RNA(n) + a ribonucleoside 5'-triphosphate = RNA(n+1) + diphosphate. In terms of biological role, DNA-dependent RNA polymerase catalyzes the transcription of DNA into RNA using the four ribonucleoside triphosphates as substrates. The protein is DNA-directed RNA polymerase subunit beta of Bacillus thuringiensis (strain Al Hakam).